Here is a 240-residue protein sequence, read N- to C-terminus: Biosynthetic peptidoglycan transglycosylase (240 aa).

Residues 12-31 (ALLWFAGGSVLLVLVFRFVP) form a helical membrane-spanning segment.

Belongs to the glycosyltransferase 51 family.

It localises to the cell inner membrane. It catalyses the reaction [GlcNAc-(1-&gt;4)-Mur2Ac(oyl-L-Ala-gamma-D-Glu-L-Lys-D-Ala-D-Ala)](n)-di-trans,octa-cis-undecaprenyl diphosphate + beta-D-GlcNAc-(1-&gt;4)-Mur2Ac(oyl-L-Ala-gamma-D-Glu-L-Lys-D-Ala-D-Ala)-di-trans,octa-cis-undecaprenyl diphosphate = [GlcNAc-(1-&gt;4)-Mur2Ac(oyl-L-Ala-gamma-D-Glu-L-Lys-D-Ala-D-Ala)](n+1)-di-trans,octa-cis-undecaprenyl diphosphate + di-trans,octa-cis-undecaprenyl diphosphate + H(+). It functions in the pathway cell wall biogenesis; peptidoglycan biosynthesis. Its function is as follows. Peptidoglycan polymerase that catalyzes glycan chain elongation from lipid-linked precursors. In Pseudomonas fluorescens (strain Pf0-1), this protein is Biosynthetic peptidoglycan transglycosylase.